The following is a 318-amino-acid chain: Dimethyladenosine transferase (318 aa).

S-adenosyl-L-methionine contacts are provided by His-37, Leu-39, Gly-64, Glu-85, Asp-113, and Asn-128.

The protein belongs to the class I-like SAM-binding methyltransferase superfamily. rRNA adenine N(6)-methyltransferase family.

The protein resides in the cytoplasm. The protein localises to the nucleus. It is found in the nucleolus. The enzyme catalyses adenosine(1779)/adenosine(1780) in 18S rRNA + 4 S-adenosyl-L-methionine = N(6)-dimethyladenosine(1779)/N(6)-dimethyladenosine(1780) in 18S rRNA + 4 S-adenosyl-L-homocysteine + 4 H(+). Its function is as follows. Specifically dimethylates two adjacent adenosines in the loop of a conserved hairpin near the 3'-end of 18S rRNA in the 40S particle. The polypeptide is Dimethyladenosine transferase (Saccharomyces cerevisiae (strain ATCC 204508 / S288c) (Baker's yeast)).